Here is a 1382-residue protein sequence, read N- to C-terminus: MEDIFNFFDKPKDPLHFSSIKISISSPDKIRERSFGEVKKPETINYRTFKPERDGLFCAKIFGPTKDYECNCGKYKRMKHRGIVCEKCGVEVIPSKVRRERLGHIDLATPVAHIWFLKSLPSRIGNLMDITLKDLEKVLYFEAYVVTDPKETGLAFGTVFSEDQYQKALEEYSYGFEAGMGAAAIRTCLTSMDLDQLSEQLRIEMQEATSEAKRKKTAKRLKVMEAFKNSGNKPEWMILECIPVLPPELRPLVPLDGGRFATSDLNDLYRRVINRNNRLKRLMELQAPEVIIRNEKRMLQEAVDALFDNGRRGRAIAGPNKRPLKSLSDMLKGKSGRFRQNLLGKRVDYSGRSVIVVGPELRLHQCGLPKKMALELFKPFIYNKLEERGFVTTIKSAKKMVEKEKPEVWDVLEEVIKEHPVLLNRAPTLHRLGIQAFEPVLIEGKAIQLHPLVCTAFNADFDGDQMAVHLPLSVESQVEARVLMMSTNNILSPAHGKPIIVPSQDMVLGIYYMTREKHFALGEGKIFASADEVNIAWDAGEIHLQARIKVRMKNLVSDEKPTLIETTTGRVLLRDILPDAVPYATINKVMTKKELSNLVDVCYRLAGNKETVILADKLKAIGFRYAAKAGISISINDMVIPEGKPAIITRATEEVQEIQNQYTEGLITDGERYNKVIDIWAKSTEDIAKEMLDNLSRDTILDPEGKEVKVPSFNAIHMMADSGARGSAQQIRQLAGMRGLMAKPSGEIIETPITANFREGLTVLQYFISTHGARKGLADTALKTANSGYLTRRLVDVAQDAIITEADCGTIDGLTVSSLTEGGEVIEHIGDRILGRVALDDILDPVTGDVLVPANEEIDENLVARIEAAGLEKVKIRSVLTCESRRGICAKCYGRDLARGHLVNRGEAVGVIAAQSIGEPGTQLTMRTFHIGGTASRRAEQTALEARNEGFAKFININYVTNSEGHHIVMNRNGELAIVDETGREREKYGVVYGAKIKVSPQEKVTQGQSVAEWDPYTMPILTEIAGRVKFGDVIEGVTMEEQVDEVTGLSRKVIIETRDADKRPRITIKDESGKTAKIGDSLLARYYLPVGSNINVLEDTEVNAGDVIAKIPRETTKTKDITGGLPRVAELFEARKPKDFAVITEIDGVVAFGKDAKGKRKVLVTPELGEPKEYLIPKGKHISVHEGDHVRAGEALMDGSSNPHDILRVLGQKELAKYLVDEVQEVYRLQGVKINDKHIETIVRQMLRRVRVKDVGDTNLLIDDQIERWVFEEENEKAMDKGGRPATAESLLLGITKASLSTESFISAASFQETTKVLTQASIEGKIDSLRGLKENVIMGRLIPAGTGLALYRNLRMVAEEPVIIPEPVEPEDEEIYEEEA.

Positions 70, 72, 85, and 88 each coordinate Zn(2+). Positions 460, 462, and 464 each coordinate Mg(2+). Residues Cys808, Cys882, Cys889, and Cys892 each coordinate Zn(2+).

Belongs to the RNA polymerase beta' chain family. The RNAP catalytic core consists of 2 alpha, 1 beta, 1 beta' and 1 omega subunit. When a sigma factor is associated with the core the holoenzyme is formed, which can initiate transcription. Mg(2+) is required as a cofactor. Zn(2+) serves as cofactor.

The catalysed reaction is RNA(n) + a ribonucleoside 5'-triphosphate = RNA(n+1) + diphosphate. DNA-dependent RNA polymerase catalyzes the transcription of DNA into RNA using the four ribonucleoside triphosphates as substrates. In Geobacter sp. (strain M21), this protein is DNA-directed RNA polymerase subunit beta'.